A 346-amino-acid polypeptide reads, in one-letter code: N-acetyl-gamma-glutamyl-phosphate reductase (346 aa).

The active site involves C149.

Belongs to the NAGSA dehydrogenase family. Type 1 subfamily.

It localises to the cytoplasm. The catalysed reaction is N-acetyl-L-glutamate 5-semialdehyde + phosphate + NADP(+) = N-acetyl-L-glutamyl 5-phosphate + NADPH + H(+). Its pathway is amino-acid biosynthesis; L-arginine biosynthesis; N(2)-acetyl-L-ornithine from L-glutamate: step 3/4. In terms of biological role, catalyzes the NADPH-dependent reduction of N-acetyl-5-glutamyl phosphate to yield N-acetyl-L-glutamate 5-semialdehyde. The protein is N-acetyl-gamma-glutamyl-phosphate reductase of Oceanobacillus iheyensis (strain DSM 14371 / CIP 107618 / JCM 11309 / KCTC 3954 / HTE831).